The sequence spans 686 residues: Mitochondrial Rho GTPase 1 (686 aa).

The Cytoplasmic segment spans residues 1–648 (MPRRDLVRIV…PAQRIRVVAR (648 aa)). One can recognise a Miro 1 domain in the interval 4-172 (RDLVRIVLVG…FYFAQKAVLH (169 aa)). GTP-binding positions include 13-20 (GDDGVGKS), 59-63 (DTSSN), and 117-120 (NKID). 2 consecutive EF-hand domains span residues 188–223 (KCLE…CFST) and 341–376 (LGNQ…SPGN). 8 residues coordinate Ca(2+): aspartate 201, aspartate 203, aspartate 205, glutamate 212, aspartate 354, aspartate 356, aspartate 358, and glutamate 365. One can recognise a Miro 2 domain in the interval 455-624 (RNVFLCYVLG…WVAITRVALD (170 aa)). GTP contacts are provided by residues 464 to 471 (GATGSGKT), 506 to 510 (EMEGV), and 574 to 577 (TKSD). A helical; Anchor for type IV membrane protein transmembrane segment spans residues 649–665 (WGLAATTISAIVAVWMK). At 666–686 (WQGYSFKGIWGWMAKFAGLRT) the chain is on the mitochondrial intermembrane side.

This sequence belongs to the mitochondrial Rho GTPase family.

It localises to the mitochondrion outer membrane. Mitochondrial GTPase involved in mitochondrial trafficking. Probably involved in control of anterograde transport of mitochondria and their subcellular distribution. This chain is Mitochondrial Rho GTPase 1 (GEM1), found in Cryptococcus neoformans var. neoformans serotype D (strain B-3501A) (Filobasidiella neoformans).